The primary structure comprises 597 residues: Aspartate--tRNA(Asp/Asn) ligase (597 aa).

Glu178 is a binding site for L-aspartate. The segment at 202 to 205 (QLFK) is aspartate. Residue Arg224 participates in L-aspartate binding. ATP contacts are provided by residues 224–226 (RDE) and Gln233. His458 lines the L-aspartate pocket. ATP is bound at residue Glu488. Arg495 contributes to the L-aspartate binding site. Position 540-543 (540-543 (GLDR)) interacts with ATP.

The protein belongs to the class-II aminoacyl-tRNA synthetase family. Type 1 subfamily. In terms of assembly, homodimer.

The protein localises to the cytoplasm. It catalyses the reaction tRNA(Asx) + L-aspartate + ATP = L-aspartyl-tRNA(Asx) + AMP + diphosphate. In terms of biological role, aspartyl-tRNA synthetase with relaxed tRNA specificity since it is able to aspartylate not only its cognate tRNA(Asp) but also tRNA(Asn). Reaction proceeds in two steps: L-aspartate is first activated by ATP to form Asp-AMP and then transferred to the acceptor end of tRNA(Asp/Asn). This Cyanothece sp. (strain PCC 7425 / ATCC 29141) protein is Aspartate--tRNA(Asp/Asn) ligase.